A 219-amino-acid chain; its full sequence is Ras-related protein Rab-3B (219 aa).

Ala-2 is subject to N-acetylalanine. The GTP site is built by Ser-31, Ser-32, Val-33, Gly-34, Lys-35, Thr-36, Ser-37, Pro-49, and Ser-53. Ser-32 serves as a coordination point for GDP. GDP is bound by residues Gly-34, Lys-35, Thr-36, and Ser-37. Thr-36 contributes to the Mg(2+) binding site. The Switch 1 motif lies at 45–58 (DTFTPAFVSTVGID). The Mg(2+) site is built by Thr-54 and Asp-77. Positions 78 to 96 (TAGQERYRTITTAYYRGAM) match the Switch 2 motif. A GTP-binding site is contributed by Gly-80. A Phosphothreonine; by LRRK2 modification is found at Thr-86. Residues Asn-135, Lys-136, and Asp-138 each coordinate GTP. GDP-binding residues include Asn-135, Lys-136, Asp-138, Met-139, Ala-166, and Lys-167. 2 residues coordinate GTP: Ala-166 and Lys-167. 2 positions are modified to phosphoserine: Ser-188 and Ser-190. 2 S-geranylgeranyl cysteine lipidation sites follow: Cys-217 and Cys-219. Position 219 is a cysteine methyl ester (Cys-219).

This sequence belongs to the small GTPase superfamily. Rab family. Interacts with RIMS1, RIMS2, RPH3A and RPH3AL. The GTP-bound form interacts with GAS8/DRC4 (via coiled-coil domains). The GTP-bound form interacts with REP15. Interacts with GDI2, CHM and CHML; phosphorylation at Thr-86 disrupts these interactions. Interacts with MADD (via uDENN domain); the GTP-bound form is preferred for interaction. Mg(2+) serves as cofactor. Phosphorylation of Thr-86 in the switch II region by LRRK2 prevents the association of RAB regulatory proteins, including CHM, CHML and RAB GDP dissociation inhibitor GDI2.

It localises to the cell membrane. The protein localises to the golgi apparatus. The enzyme catalyses GTP + H2O = GDP + phosphate + H(+). Its activity is regulated as follows. Regulated by guanine nucleotide exchange factors (GEFs) which promote the exchange of bound GDP for free GTP. Regulated by GTPase activating proteins (GAPs) which increase the GTP hydrolysis activity. Inhibited by GDP dissociation inhibitors (GDIs) which prevent Rab-GDP dissociation. The small GTPases Rab are key regulators of intracellular membrane trafficking, from the formation of transport vesicles to their fusion with membranes. Rabs cycle between an inactive GDP-bound form and an active GTP-bound form that is able to recruit to membranes different sets of downstream effectors directly responsible for vesicle formation, movement, tethering and fusion. The protein is Ras-related protein Rab-3B of Homo sapiens (Human).